The primary structure comprises 119 residues: Large ribosomal subunit protein bL20c (119 aa).

It belongs to the bacterial ribosomal protein bL20 family.

It is found in the plastid. It localises to the chloroplast. In terms of biological role, binds directly to 23S ribosomal RNA and is necessary for the in vitro assembly process of the 50S ribosomal subunit. It is not involved in the protein synthesizing functions of that subunit. The chain is Large ribosomal subunit protein bL20c (rpl20) from Zea mays (Maize).